Reading from the N-terminus, the 206-residue chain is LexA repressor (206 aa).

The segment at residues 28-48 (VREICNAVGLSSTSTVHGHLS) is a DNA-binding region (H-T-H motif). Active-site for autocatalytic cleavage activity residues include S128 and K166.

The protein belongs to the peptidase S24 family. In terms of assembly, homodimer.

The catalysed reaction is Hydrolysis of Ala-|-Gly bond in repressor LexA.. Represses a number of genes involved in the response to DNA damage (SOS response), including recA and lexA. In the presence of single-stranded DNA, RecA interacts with LexA causing an autocatalytic cleavage which disrupts the DNA-binding part of LexA, leading to derepression of the SOS regulon and eventually DNA repair. The sequence is that of LexA repressor from Ligilactobacillus salivarius (strain UCC118) (Lactobacillus salivarius).